Here is a 289-residue protein sequence, read N- to C-terminus: Cell division protein ZipA (289 aa).

Met1 is a topological domain (periplasmic). A helical membrane pass occupies residues 2–22 (DIGLREWLIVIGLIVIAGILF). Residues 23–289 (DGWRRMRGGK…HERRSLMQKR (267 aa)) lie on the Cytoplasmic side of the membrane. The interval 66 to 141 (REPSFDEQDL…KEREKAPAVA (76 aa)) is disordered. Over residues 81-99 (REAKERKGGKRQEEPRQGD) the composition is skewed to basic and acidic residues. The span at 100 to 114 (LDLDEGLALEADPSD) shows a compositional bias: acidic residues.

It belongs to the ZipA family. Interacts with FtsZ via their C-terminal domains.

The protein resides in the cell inner membrane. In terms of biological role, essential cell division protein that stabilizes the FtsZ protofilaments by cross-linking them and that serves as a cytoplasmic membrane anchor for the Z ring. Also required for the recruitment to the septal ring of downstream cell division proteins. This is Cell division protein ZipA from Pseudomonas aeruginosa (strain LESB58).